We begin with the raw amino-acid sequence, 224 residues long: Ribonuclease 3 (224 aa).

An RNase III domain is found at 4 to 127 (YSKLEKCLDY…IMGAIYLESG (124 aa)). Residue glutamate 40 coordinates Mg(2+). Aspartate 44 is an active-site residue. Mg(2+) contacts are provided by aspartate 113 and glutamate 116. Residue glutamate 116 is part of the active site. Positions 154–223 (DYKTALQEIT…AKIAIDKLKE (70 aa)) constitute a DRBM domain.

Belongs to the ribonuclease III family. Homodimer. It depends on Mg(2+) as a cofactor.

It is found in the cytoplasm. It carries out the reaction Endonucleolytic cleavage to 5'-phosphomonoester.. Digests double-stranded RNA. Involved in the processing of primary rRNA transcript to yield the immediate precursors to the large and small rRNAs (23S and 16S). Processes some mRNAs, and tRNAs when they are encoded in the rRNA operon. Processes pre-crRNA and tracrRNA of type II CRISPR loci if present in the organism. The polypeptide is Ribonuclease 3 (Aliarcobacter butzleri (strain RM4018) (Arcobacter butzleri)).